The sequence spans 511 residues: Bifunctional purine biosynthesis protein PurH (511 aa).

Positions 1-147 constitute an MGS-like domain; it reads MIQIKRALIS…KNYKHTLVLT (147 aa).

The protein belongs to the PurH family.

The enzyme catalyses (6R)-10-formyltetrahydrofolate + 5-amino-1-(5-phospho-beta-D-ribosyl)imidazole-4-carboxamide = 5-formamido-1-(5-phospho-D-ribosyl)imidazole-4-carboxamide + (6S)-5,6,7,8-tetrahydrofolate. It catalyses the reaction IMP + H2O = 5-formamido-1-(5-phospho-D-ribosyl)imidazole-4-carboxamide. It participates in purine metabolism; IMP biosynthesis via de novo pathway; 5-formamido-1-(5-phospho-D-ribosyl)imidazole-4-carboxamide from 5-amino-1-(5-phospho-D-ribosyl)imidazole-4-carboxamide (10-formyl THF route): step 1/1. Its pathway is purine metabolism; IMP biosynthesis via de novo pathway; IMP from 5-formamido-1-(5-phospho-D-ribosyl)imidazole-4-carboxamide: step 1/1. This chain is Bifunctional purine biosynthesis protein PurH, found in Leptospira interrogans serogroup Icterohaemorrhagiae serovar Lai (strain 56601).